The sequence spans 403 residues: S-adenosylmethionine synthase (403 aa).

An ATP-binding site is contributed by His17. Asp19 is a Mg(2+) binding site. Glu45 contributes to the K(+) binding site. L-methionine contacts are provided by Glu58 and Gln104. Residues 104 to 114 (QSPDIAQGVDT) form a flexible loop region. ATP is bound by residues 179–181 (DGK), 250–251 (KF), Asp259, 265–266 (RK), Ala282, and Lys286. Asp259 is a binding site for L-methionine. An L-methionine-binding site is contributed by Lys290.

This sequence belongs to the AdoMet synthase family. As to quaternary structure, homotetramer; dimer of dimers. The cofactor is Mg(2+). It depends on K(+) as a cofactor.

The protein localises to the cytoplasm. It carries out the reaction L-methionine + ATP + H2O = S-adenosyl-L-methionine + phosphate + diphosphate. It functions in the pathway amino-acid biosynthesis; S-adenosyl-L-methionine biosynthesis; S-adenosyl-L-methionine from L-methionine: step 1/1. Functionally, catalyzes the formation of S-adenosylmethionine (AdoMet) from methionine and ATP. The overall synthetic reaction is composed of two sequential steps, AdoMet formation and the subsequent tripolyphosphate hydrolysis which occurs prior to release of AdoMet from the enzyme. The protein is S-adenosylmethionine synthase of Mycolicibacterium paratuberculosis (strain ATCC BAA-968 / K-10) (Mycobacterium paratuberculosis).